The following is a 677-amino-acid chain: Levanase (677 aa).

An N-terminal signal peptide occupies residues 1–24; sequence MKKRLIQVMIMFTLLLTMAFSADA. Residues 46 to 49, Q65, W73, 105 to 106, 171 to 172, E223, and W313 each bind substrate; these read WMND, FS, and RD. Residue D49 is part of the active site.

Belongs to the glycosyl hydrolase 32 family.

It is found in the secreted. It carries out the reaction Hydrolysis of terminal, non-reducing (2-&gt;1)- and (2-&gt;6)-linked beta-D-fructofuranose residues in fructans.. Is completely inhibited by Ag(+) and Hg(2+) ions. Functionally, exo-fructosidase that can hydrolyze both levan and inulin, leading to the production of free fructose. Is also able to hydrolyze sucrose and to a small extent raffinose, but not melezitose, stachylose, cellobiose, maltose, and lactose. The chain is Levanase (sacC) from Bacillus subtilis (strain 168).